We begin with the raw amino-acid sequence, 360 residues long: Polyamine aminopropyltransferase 2 (360 aa).

A PABS domain is found at 68–299; it reads DIWDEISLKE…TDWGFHIAAN (232 aa). Gln-94 is an S-methyl-5'-thioadenosine binding site. Spermidine is bound by residues His-123 and Asp-147. Residues Asp-167 and 201–202 each bind S-methyl-5'-thioadenosine; that span reads DA. The Proton acceptor role is filled by Asp-219.

It belongs to the spermidine/spermine synthase family. As to quaternary structure, homodimer or homotetramer.

Its subcellular location is the cytoplasm. The catalysed reaction is S-adenosyl 3-(methylsulfanyl)propylamine + putrescine = S-methyl-5'-thioadenosine + spermidine + H(+). Its pathway is amine and polyamine biosynthesis; spermidine biosynthesis; spermidine from putrescine: step 1/1. In terms of biological role, catalyzes the irreversible transfer of a propylamine group from the amino donor S-adenosylmethioninamine (decarboxy-AdoMet) to putrescine (1,4-diaminobutane) to yield spermidine. The chain is Polyamine aminopropyltransferase 2 from Bacillus anthracis.